The primary structure comprises 141 residues: Hemoglobin subunit alpha (141 aa).

Residues Val1 to Arg141 form the Globin domain. Position 3 is a phosphoserine (Ser3). 2 positions are modified to N6-succinyllysine: Lys7 and Lys11. Lys16 carries the N6-acetyllysine; alternate modification. Lys16 is modified (N6-succinyllysine; alternate). Tyr24 is subject to Phosphotyrosine. Ser35 carries the phosphoserine modification. Lys40 is modified (N6-succinyllysine). A Phosphoserine modification is found at Ser49. His58 contributes to the O2 binding site. Position 87 (His87) interacts with heme b. Ser102 is modified (phosphoserine). Position 108 is a phosphothreonine (Thr108). At Ser124 the chain carries Phosphoserine. 2 positions are modified to phosphothreonine: Thr134 and Thr137. Ser138 bears the Phosphoserine mark.

It belongs to the globin family. As to quaternary structure, heterotetramer of two alpha chains and two beta chains. In terms of tissue distribution, red blood cells.

In terms of biological role, involved in oxygen transport from the lung to the various peripheral tissues. Functionally, hemopressin acts as an antagonist peptide of the cannabinoid receptor CNR1. Hemopressin-binding efficiently blocks cannabinoid receptor CNR1 and subsequent signaling. The polypeptide is Hemoglobin subunit alpha (HBA) (Panthera pardus saxicolor (Northern Persian leopard)).